The sequence spans 212 residues: Large ribosomal subunit protein bL25 (212 aa).

The interval 179–212 (EPEEEELPEDDEAAAEGEDAAAGEEAEAPAESED) is disordered.

It belongs to the bacterial ribosomal protein bL25 family. CTC subfamily. Part of the 50S ribosomal subunit; part of the 5S rRNA/L5/L18/L25 subcomplex. Contacts the 5S rRNA. Binds to the 5S rRNA independently of L5 and L18.

In terms of biological role, this is one of the proteins that binds to the 5S RNA in the ribosome where it forms part of the central protuberance. The chain is Large ribosomal subunit protein bL25 from Corynebacterium urealyticum (strain ATCC 43042 / DSM 7109).